The primary structure comprises 227 residues: PKHD-type hydroxylase Bxeno_B2194 (227 aa).

Positions 78–178 (KVFPPLFNRY…RVASFFWIQS (101 aa)) constitute a Fe2OG dioxygenase domain. 3 residues coordinate Fe cation: histidine 96, aspartate 98, and histidine 159. Position 169 (arginine 169) interacts with 2-oxoglutarate.

Fe(2+) is required as a cofactor. Requires L-ascorbate as cofactor.

This is PKHD-type hydroxylase Bxeno_B2194 from Paraburkholderia xenovorans (strain LB400).